A 313-amino-acid chain; its full sequence is Acetaldehyde dehydrogenase 3 (313 aa).

Ser-11–Ile-14 serves as a coordination point for NAD(+). The Acyl-thioester intermediate role is filled by Cys-129. Residues Ser-160–Asn-168 and Asn-288 contribute to the NAD(+) site.

It belongs to the acetaldehyde dehydrogenase family.

It catalyses the reaction acetaldehyde + NAD(+) + CoA = acetyl-CoA + NADH + H(+). The chain is Acetaldehyde dehydrogenase 3 from Rhizorhabdus wittichii (strain DSM 6014 / CCUG 31198 / JCM 15750 / NBRC 105917 / EY 4224 / RW1) (Sphingomonas wittichii).